The sequence spans 460 residues: Dihydroorotate dehydrogenase (quinone), mitochondrial (460 aa).

Residues 1–32 (MAGRAATSSAKWAREFLFRRVSSNPLGATRNC) constitute a mitochondrion transit peptide. Residues 53–69 (ILTGATIGLAIAGGAYV) form a helical membrane-spanning segment. Residues 141–145 (AGFDK) and Ser165 each bind FMN. Lys145 serves as a coordination point for substrate. Residue 190-194 (NRCGF) participates in substrate binding. A disordered region spans residues 213-245 (RMLAETSATSSSPSDDVKPGGKSGPGILGVNLG). FMN contacts are provided by Asn243 and Asn274. 274–279 (NVSSPN) contacts substrate. Catalysis depends on Ser277, which acts as the Nucleophile. Lys319 and Ser347 together coordinate FMN. Substrate is bound at residue 348–349 (NT). Residues Gly371, Gly400, and 421 to 422 (YT) each bind FMN.

The protein belongs to the dihydroorotate dehydrogenase family. Type 2 subfamily. Requires FMN as cofactor.

The protein localises to the mitochondrion inner membrane. The enzyme catalyses (S)-dihydroorotate + a quinone = orotate + a quinol. Its pathway is pyrimidine metabolism; UMP biosynthesis via de novo pathway; orotate from (S)-dihydroorotate (quinone route): step 1/1. In terms of biological role, catalyzes the conversion of dihydroorotate to orotate with quinone as electron acceptor. The protein is Dihydroorotate dehydrogenase (quinone), mitochondrial (PYRD) of Arabidopsis thaliana (Mouse-ear cress).